Reading from the N-terminus, the 424-residue chain is Anaerobic glycerol-3-phosphate dehydrogenase subunit B (424 aa).

Belongs to the anaerobic G-3-P dehydrogenase subunit B family. As to quaternary structure, composed of a catalytic GlpA/B dimer and of membrane bound GlpC. FMN is required as a cofactor.

It carries out the reaction a quinone + sn-glycerol 3-phosphate = dihydroxyacetone phosphate + a quinol. It functions in the pathway polyol metabolism; glycerol degradation via glycerol kinase pathway; glycerone phosphate from sn-glycerol 3-phosphate (anaerobic route): step 1/1. In terms of biological role, conversion of glycerol 3-phosphate to dihydroxyacetone. Uses fumarate or nitrate as electron acceptor. The polypeptide is Anaerobic glycerol-3-phosphate dehydrogenase subunit B (Yersinia pseudotuberculosis serotype I (strain IP32953)).